The chain runs to 601 residues: Glutathione-regulated potassium-efflux system protein KefB (601 aa).

13 helical membrane-spanning segments follow: residues 4–24, 29–49, 55–75, 87–107, 115–135, 152–172, 177–197, 207–227, 230–250, 268–288, 291–311, 324–344, and 356–376; these read SDFLLAGVLFLFAAVAAVPLA, IGAVLGYLLAGIAIGPWGLGF, EILHFSELGVVFLMFIIGLEL, IFGVGAAQVLLSAALLAGLLM, AAVVGGIGLAMSSTAMALQLM, VLLFQDLAVIPALALVPLLAG, HFDWMKIGMKVLAFVGMLIGG, FIAASGVREVFTAATLLLVLG, LFMDALGLSMALGTFIAGVLL, GLLLGLFFISVGMSLNLGVLY, LLWVVIAVVVLVAVKILVLYL, MQFAGVLSQGGEFAFVLFSTA, and ALLLVTVTLSMMTTPLLMKLV. The RCK N-terminal domain occupies 400 to 519; the sequence is KPQVIVVGFG…AGVTQFSRET (120 aa).

Belongs to the monovalent cation:proton antiporter 2 (CPA2) transporter (TC 2.A.37) family. KefB subfamily. In terms of assembly, interacts with the regulatory subunit KefG.

It is found in the cell inner membrane. Functionally, pore-forming subunit of a potassium efflux system that confers protection against electrophiles. Catalyzes K(+)/H(+) antiport. This Escherichia coli O17:K52:H18 (strain UMN026 / ExPEC) protein is Glutathione-regulated potassium-efflux system protein KefB.